Here is a 362-residue protein sequence, read N- to C-terminus: Nicotinate-nucleotide--dimethylbenzimidazole phosphoribosyltransferase (362 aa).

Glutamate 321 acts as the Proton acceptor in catalysis.

It belongs to the CobT family.

The catalysed reaction is 5,6-dimethylbenzimidazole + nicotinate beta-D-ribonucleotide = alpha-ribazole 5'-phosphate + nicotinate + H(+). The protein operates within nucleoside biosynthesis; alpha-ribazole biosynthesis; alpha-ribazole from 5,6-dimethylbenzimidazole: step 1/2. Its function is as follows. Catalyzes the synthesis of alpha-ribazole-5'-phosphate from nicotinate mononucleotide (NAMN) and 5,6-dimethylbenzimidazole (DMB). The chain is Nicotinate-nucleotide--dimethylbenzimidazole phosphoribosyltransferase from Clostridium tetani (strain Massachusetts / E88).